A 353-amino-acid polypeptide reads, in one-letter code: Photosystem II protein D1 (353 aa).

An N-acetylthreonine modification is found at T2. At T2 the chain carries Phosphothreonine. 3 helical membrane-spanning segments follow: residues Y29–S46, H118–L133, and W142–A156. A chlorophyll a-binding site is contributed by H118. Position 126 (Y126) interacts with pheophytin a. D170 and E189 together coordinate [CaMn4O5] cluster. The helical transmembrane segment at F197–L218 threads the bilayer. H198 serves as a coordination point for chlorophyll a. A quinone-binding positions include H215 and S264 to F265. H215 is a Fe cation binding site. Position 272 (H272) interacts with Fe cation. A helical membrane pass occupies residues F274–L288. [CaMn4O5] cluster-binding residues include H332, E333, D342, and A344. The propeptide occupies V345–G353.

This sequence belongs to the reaction center PufL/M/PsbA/D family. In terms of assembly, PSII is composed of 1 copy each of membrane proteins PsbA, PsbB, PsbC, PsbD, PsbE, PsbF, PsbH, PsbI, PsbJ, PsbK, PsbL, PsbM, PsbT, PsbX, PsbY, PsbZ, Psb30/Ycf12, at least 3 peripheral proteins of the oxygen-evolving complex and a large number of cofactors. It forms dimeric complexes. The cofactor is The D1/D2 heterodimer binds P680, chlorophylls that are the primary electron donor of PSII, and subsequent electron acceptors. It shares a non-heme iron and each subunit binds pheophytin, quinone, additional chlorophylls, carotenoids and lipids. D1 provides most of the ligands for the Mn4-Ca-O5 cluster of the oxygen-evolving complex (OEC). There is also a Cl(-1) ion associated with D1 and D2, which is required for oxygen evolution. The PSII complex binds additional chlorophylls, carotenoids and specific lipids.. In terms of processing, tyr-161 forms a radical intermediate that is referred to as redox-active TyrZ, YZ or Y-Z. Post-translationally, C-terminally processed by CTPA; processing is essential to allow assembly of the oxygen-evolving complex and thus photosynthetic growth.

The protein resides in the plastid. The protein localises to the chloroplast thylakoid membrane. It carries out the reaction 2 a plastoquinone + 4 hnu + 2 H2O = 2 a plastoquinol + O2. In terms of biological role, photosystem II (PSII) is a light-driven water:plastoquinone oxidoreductase that uses light energy to abstract electrons from H(2)O, generating O(2) and a proton gradient subsequently used for ATP formation. It consists of a core antenna complex that captures photons, and an electron transfer chain that converts photonic excitation into a charge separation. The D1/D2 (PsbA/PsbD) reaction center heterodimer binds P680, the primary electron donor of PSII as well as several subsequent electron acceptors. The protein is Photosystem II protein D1 of Chlorella vulgaris (Green alga).